The chain runs to 519 residues: Ion-translocating oxidoreductase complex subunit C (519 aa).

2 consecutive 4Fe-4S ferredoxin-type domains span residues glutamate 372–asparagine 401 and glycine 411–phenylalanine 440. Residues cysteine 381, cysteine 384, cysteine 387, cysteine 391, cysteine 420, cysteine 423, cysteine 426, and cysteine 430 each coordinate [4Fe-4S] cluster. A disordered region spans residues lysine 494 to proline 519.

It belongs to the 4Fe4S bacterial-type ferredoxin family. RnfC subfamily. In terms of assembly, the complex is composed of six subunits: RnfA, RnfB, RnfC, RnfD, RnfE and RnfG. The cofactor is [4Fe-4S] cluster.

It is found in the cellular chromatophore membrane. In terms of biological role, part of a membrane-bound complex that couples electron transfer with translocation of ions across the membrane. Required for nitrogen fixation. Involved in electron transfer to nitrogenase. The sequence is that of Ion-translocating oxidoreductase complex subunit C from Rhodobacter capsulatus (Rhodopseudomonas capsulata).